Here is a 638-residue protein sequence, read N- to C-terminus: Zinc finger protein 143 (638 aa).

Position 1 is an N-acetylmethionine (Met1). A Glycyl lysine isopeptide (Lys-Gly) (interchain with G-Cter in SUMO2) cross-link involves residue Lys213. C2H2-type zinc fingers lie at residues 237–261, 267–291, 297–321, and 327–351; these read FRCKYDGCGKLYTTAHHLKVHERSH, YQCEHSGCGKAFATGYGLKSHFRTH, YRCSEDNCTKSFKTSGDLQKHIRTH, and FKCPIEGCGRSFTTSNIRKVHIRTH. At Thr352 the chain carries Phosphothreonine. C2H2-type zinc fingers lie at residues 357–381, 387–411, and 417–440; these read YYCTEPGCGRAFASATNYKNHVRIH, YVCTVPGCDKRFTEYSSLYKHHVVH, and YNCNHCGKTYKQISTLAMHKRTAH. A Glycyl lysine isopeptide (Lys-Gly) (interchain with G-Cter in SUMO2) cross-link involves residue Lys406.

The protein belongs to the GLI C2H2-type zinc-finger protein family. In terms of assembly, interacts with CHD8. Forms a complex with HCFC1 and ZNF143.

It localises to the nucleus. Its function is as follows. Transcriptional activator. In complex with HCFC1 and ZNF143, regulates the expression of several genes, including AP2S1, ESCO2, OPHN1, RBL1, UBXN8 and ZNF32. Activates the gene for selenocysteine tRNA (tRNAsec). Binds to the SPH motif of small nuclear RNA (snRNA) gene promoters. Participates in efficient U6 RNA polymerase III transcription via its interaction with CHD8. The sequence is that of Zinc finger protein 143 (Znf143) from Rattus norvegicus (Rat).